We begin with the raw amino-acid sequence, 207 residues long: D-aminoacyl-tRNA deacylase 1 (207 aa).

The Gly-cisPro motif, important for rejection of L-amino acids motif lies at 139–140 (GP). Residues 142–207 (TIQLESPPAP…EGDVSSEREP (66 aa)) form a disordered region. Composition is skewed to basic and acidic residues over residues 156–167 (LLSKQEKQQQRK) and 178–189 (SSREKAAQRSKV).

The protein belongs to the DTD family. As to quaternary structure, homodimer.

It is found in the cytoplasm. The catalysed reaction is a D-aminoacyl-tRNA + H2O = a tRNA + a D-alpha-amino acid + H(+). It catalyses the reaction glycyl-tRNA(Ala) + H2O = tRNA(Ala) + glycine + H(+). In terms of biological role, D-aminoacyl-tRNA deacylase, with no observable activity on tRNAs charged with their cognate L-amino acid. Hydrolyzes correctly charged, achiral, glycyl-tRNA(Gly). Deacylates mischarged D.melanogaster and E.coli glycyl-tRNA(Ala), protecting cells against glycine mischarging by AlaRS. Acts via tRNA-based rather than protein-based catalysis; rejects L-amino acids rather than detecting D-amino acids in the active site. By recycling D-aminoacyl-tRNA to D-amino acids and free tRNA molecules, this enzyme counteracts the toxicity associated with the formation of D-aminoacyl-tRNA entities in vivo and helps enforce protein L-homochirality. The chain is D-aminoacyl-tRNA deacylase 1 from Danio rerio (Zebrafish).